Reading from the N-terminus, the 247-residue chain is Carboxy-S-adenosyl-L-methionine synthase (247 aa).

Residues Tyr39, 64 to 66 (GCS), 89 to 90 (DN), 117 to 118 (DI), Asn132, and Arg199 contribute to the S-adenosyl-L-methionine site.

The protein belongs to the class I-like SAM-binding methyltransferase superfamily. Cx-SAM synthase family. As to quaternary structure, homodimer.

It carries out the reaction prephenate + S-adenosyl-L-methionine = carboxy-S-adenosyl-L-methionine + 3-phenylpyruvate + H2O. Functionally, catalyzes the conversion of S-adenosyl-L-methionine (SAM) to carboxy-S-adenosyl-L-methionine (Cx-SAM). This is Carboxy-S-adenosyl-L-methionine synthase from Shigella boydii serotype 4 (strain Sb227).